We begin with the raw amino-acid sequence, 245 residues long: Enolase-phosphatase E1 (245 aa).

Mg(2+) is bound by residues aspartate 14 and glutamate 16. Residues 141-142 (SS) and lysine 175 contribute to the substrate site. Aspartate 200 lines the Mg(2+) pocket.

Belongs to the HAD-like hydrolase superfamily. MasA/MtnC family. In terms of assembly, monomer. The cofactor is Mg(2+).

It is found in the cytoplasm. It localises to the nucleus. It catalyses the reaction 5-methylsulfanyl-2,3-dioxopentyl phosphate + H2O = 1,2-dihydroxy-5-(methylsulfanyl)pent-1-en-3-one + phosphate. It functions in the pathway amino-acid biosynthesis; L-methionine biosynthesis via salvage pathway; L-methionine from S-methyl-5-thio-alpha-D-ribose 1-phosphate: step 3/6. The protein operates within amino-acid biosynthesis; L-methionine biosynthesis via salvage pathway; L-methionine from S-methyl-5-thio-alpha-D-ribose 1-phosphate: step 4/6. Bifunctional enzyme that catalyzes the enolization of 2,3-diketo-5-methylthiopentyl-1-phosphate (DK-MTP-1-P) into the intermediate 2-hydroxy-3-keto-5-methylthiopentenyl-1-phosphate (HK-MTPenyl-1-P), which is then dephosphorylated to form the acireductone 1,2-dihydroxy-3-keto-5-methylthiopentene (DHK-MTPene). This is Enolase-phosphatase E1 from Drosophila grimshawi (Hawaiian fruit fly).